Consider the following 928-residue polypeptide: Isoleucine--tRNA ligase (928 aa).

The short motif at 57 to 67 (PFANGNIHMGH) is the 'HIGH' region element. E554 lines the L-isoleucyl-5'-AMP pocket. The 'KMSKS' region signature appears at 595–599 (KMSKS). K598 provides a ligand contact to ATP. C887, C890, C907, and C910 together coordinate Zn(2+).

It belongs to the class-I aminoacyl-tRNA synthetase family. IleS type 1 subfamily. Monomer. Requires Zn(2+) as cofactor.

It is found in the cytoplasm. The enzyme catalyses tRNA(Ile) + L-isoleucine + ATP = L-isoleucyl-tRNA(Ile) + AMP + diphosphate. In terms of biological role, catalyzes the attachment of isoleucine to tRNA(Ile). As IleRS can inadvertently accommodate and process structurally similar amino acids such as valine, to avoid such errors it has two additional distinct tRNA(Ile)-dependent editing activities. One activity is designated as 'pretransfer' editing and involves the hydrolysis of activated Val-AMP. The other activity is designated 'posttransfer' editing and involves deacylation of mischarged Val-tRNA(Ile). This Lactobacillus johnsonii (strain CNCM I-12250 / La1 / NCC 533) protein is Isoleucine--tRNA ligase.